The primary structure comprises 267 residues: Sepiapterin reductase (267 aa).

Met1 bears the N-acetylmethionine mark. 20 to 26 serves as a coordination point for NADP(+); it reads GASRGFG. Ser38 carries the phosphoserine modification. Residues 48 to 49 and 75 to 76 contribute to the NADP(+) site; these read RN and DL. Residues 163–164 and Tyr176 contribute to the substrate site; that span reads SI. Lys180 is a binding site for NADP(+). A Phosphoserine modification is found at Ser201. Substrate is bound at residue Gly205. 207–212 lines the NADP(+) pocket; the sequence is LDTDMQ. Ser219 carries the post-translational modification Phosphoserine. Asp263 is a binding site for substrate.

Belongs to the sepiapterin reductase family. In terms of assembly, homodimer.

It is found in the cytoplasm. It catalyses the reaction L-erythro-7,8-dihydrobiopterin + NADP(+) = L-sepiapterin + NADPH + H(+). The catalysed reaction is (6R)-L-erythro-5,6,7,8-tetrahydrobiopterin + 2 NADP(+) = 6-pyruvoyl-5,6,7,8-tetrahydropterin + 2 NADPH + 2 H(+). In terms of biological role, catalyzes the final one or two reductions in tetra-hydrobiopterin biosynthesis to form 5,6,7,8-tetrahydrobiopterin. This is Sepiapterin reductase (SPR) from Bos taurus (Bovine).